The following is a 243-amino-acid chain: Pyridoxine 5'-phosphate synthase (243 aa).

Position 9 (asparagine 9) interacts with 3-amino-2-oxopropyl phosphate. 11–12 (DH) serves as a coordination point for 1-deoxy-D-xylulose 5-phosphate. Residue arginine 20 coordinates 3-amino-2-oxopropyl phosphate. Histidine 45 (proton acceptor) is an active-site residue. 2 residues coordinate 1-deoxy-D-xylulose 5-phosphate: arginine 47 and histidine 52. Glutamate 72 acts as the Proton acceptor in catalysis. Position 102 (threonine 102) interacts with 1-deoxy-D-xylulose 5-phosphate. Catalysis depends on histidine 193, which acts as the Proton donor. 3-amino-2-oxopropyl phosphate is bound by residues glycine 194 and 215 to 216 (GH).

The protein belongs to the PNP synthase family. As to quaternary structure, homooctamer; tetramer of dimers.

Its subcellular location is the cytoplasm. The catalysed reaction is 3-amino-2-oxopropyl phosphate + 1-deoxy-D-xylulose 5-phosphate = pyridoxine 5'-phosphate + phosphate + 2 H2O + H(+). It functions in the pathway cofactor biosynthesis; pyridoxine 5'-phosphate biosynthesis; pyridoxine 5'-phosphate from D-erythrose 4-phosphate: step 5/5. In terms of biological role, catalyzes the complicated ring closure reaction between the two acyclic compounds 1-deoxy-D-xylulose-5-phosphate (DXP) and 3-amino-2-oxopropyl phosphate (1-amino-acetone-3-phosphate or AAP) to form pyridoxine 5'-phosphate (PNP) and inorganic phosphate. This Vibrio parahaemolyticus serotype O3:K6 (strain RIMD 2210633) protein is Pyridoxine 5'-phosphate synthase.